The chain runs to 127 residues: uncharacterized protein (127 aa).

A run of 2 helical transmembrane segments spans residues 64-84 (GYYI…FGYL) and 101-118 (FFHF…AIYY).

Its subcellular location is the membrane. This is an uncharacterized protein from Saccharomyces cerevisiae (strain ATCC 204508 / S288c) (Baker's yeast).